Reading from the N-terminus, the 316-residue chain is Serpentine receptor class gamma-4 (316 aa).

7 consecutive transmembrane segments (helical) span residues Phe21–Thr41, Ser50–Val70, Ile99–Asn121, Met140–Ile160, Phe188–Leu208, Thr229–Phe249, and Ile258–Met278.

It belongs to the nematode receptor-like protein srg family.

Its subcellular location is the membrane. This Caenorhabditis elegans protein is Serpentine receptor class gamma-4 (srg-4).